The sequence spans 98 residues: Defensin-B (98 aa).

An N-terminal signal peptide occupies residues 1-20 (MKSITVICFLALCTVAITSA). The propeptide occupies 21–58 (YPQEPVLADEARPFANSLFDELPEETYQAAVENFRLKR). 3 disulfides stabilise this stretch: C61/C88, C74/C94, and C78/C96.

The protein belongs to the invertebrate defensin family. Type 1 subfamily.

The protein localises to the secreted. Its function is as follows. Antibacterial peptide mostly active against Gram-positive bacteria. This chain is Defensin-B (DEFB), found in Aedes aegypti (Yellowfever mosquito).